We begin with the raw amino-acid sequence, 440 residues long: tRNA(Ile)-lysidine synthase (440 aa).

Residue Ser31–Ser36 participates in ATP binding.

The protein belongs to the tRNA(Ile)-lysidine synthase family.

The protein localises to the cytoplasm. The enzyme catalyses cytidine(34) in tRNA(Ile2) + L-lysine + ATP = lysidine(34) in tRNA(Ile2) + AMP + diphosphate + H(+). Its function is as follows. Ligates lysine onto the cytidine present at position 34 of the AUA codon-specific tRNA(Ile) that contains the anticodon CAU, in an ATP-dependent manner. Cytidine is converted to lysidine, thus changing the amino acid specificity of the tRNA from methionine to isoleucine. The sequence is that of tRNA(Ile)-lysidine synthase from Borreliella afzelii (strain PKo) (Borrelia afzelii).